The primary structure comprises 66 residues: Large ribosomal subunit protein bL31 (66 aa).

Residues Cys16, Cys18, Cys36, and Cys39 each contribute to the Zn(2+) site.

It belongs to the bacterial ribosomal protein bL31 family. Type A subfamily. Part of the 50S ribosomal subunit. Requires Zn(2+) as cofactor.

Binds the 23S rRNA. The chain is Large ribosomal subunit protein bL31 from Priestia megaterium (Bacillus megaterium).